The following is a 1100-amino-acid chain: MSYYQRPFSPSAYSLPASLNSSIVMQHGTSLDSTDTYPQHAQSLDGTTSSSIPLYRSSEEEKRVTVIKAPHYPGIGPVDESGIPTAIRTTVDRPKDWYKTMFKQIHMVHKPDDDTDMYNTPYTYNAGLYNPPYSAQSHPAAKTQTYRPLSKSHSDNSPNAFKDASSPVPPPHVPPPVPPLRPRDRSSTEKHDWDPPDRKVDTRKFRSEPRSIFEYEPGKSSILQHERPASLYQSSIDRSLERPMSSASMASDFRKRRKSEPAVGPPRGLGDQSASRTSPGRVDLPGSSTTLTKSFTSSSPSSPSRAKGGDDSKICPSLCSYSGLNGNPSSELDYCSTYRQHLDVPRDSPRAISFKNGWQMARQNAEIWSSTEETVSPKIKSRSCDDLLNDDCDSFPDPKVKSESMGSLLCEEDSKESCPMAWGSPYVPEVRSNGRSRIRHRSARNAPGFLKMYKKMHRINRKDLMNSEVICSVKSRILQYESEQQHKDLLRAWSQCSTEEVPRDMVPTRISEFEKLIQKSKSMPNLGDDMLSPVTLEPPQNGLCPKRRFSIEYLLEEENQSGPPARGRRGCQSNALVPIHIEVTSDEQPRAHVEFSDSDQDGVVSDHSDYIHLEGSSFCSESDFDHFSFTSSESFYGSSHHHHHHHHHHHRHLISSCKGRCPASYTRFTTMLKHERARHENTEEPRRQEMDPGLSKLAFLVSPVPFRRKKNSAPKKQTEKAKCKASVFEALDSALKDICDQIKAEKKRGSLPDNSILHRLISELLPDVPERNSSLRALRRSPLHQPLHPLPPDGAIHCPPYQNDCGRMPRSASFQDVDTANSSCHHQDRGGALQDRESPRSYSSTLTDMGRSAPRERRGTPEKEKLPAKAVYDFKAQTSKELSFKKGDTVYILRKIDQNWYEGEHHGRVGIFPISYVEKLTPPEKAQPARPPPPAQPGEIGEAIAKYNFNADTNVELSLRKGDRVILLKRVDQNWYEGKIPGTNRQGIFPVSYVEVVKKNTKGAEDYPDPPIPHSYSSDRIHSLSSNKPQRPVFTHENIQGGGEPFQALYNYTPRNEDELELRESDVIDVMEKCDDGWFVGTSRRTKFFGTFPGNYVKRL.

Phosphoserine occurs at positions 13, 14, 27, 28, 30, and 43. The span at 30–52 shows a compositional bias: polar residues; the sequence is SLDSTDTYPQHAQSLDGTTSSSI. Positions 30 to 57 are disordered; that stretch reads SLDSTDTYPQHAQSLDGTTSSSIPLYRS. In terms of domain architecture, SoHo spans 66-127; the sequence is VIKAPHYPGI…YNTPYTYNAG (62 aa). A compositionally biased stretch (polar residues) spans 134–147; that stretch reads SAQSHPAAKTQTYR. Residues 134-311 are disordered; that stretch reads SAQSHPAAKT…SPSRAKGGDD (178 aa). Residue His-153 is modified to Alanine amide. Ser-154 and Ser-157 each carry phosphoserine. A compositionally biased stretch (pro residues) spans 167-180; that stretch reads PVPPPHVPPPVPPL. The segment covering 181–217 has biased composition (basic and acidic residues); it reads RPRDRSSTEKHDWDPPDRKVDTRKFRSEPRSIFEYEP. Ser-234 and Ile-236 each carry phosphothreonine. Residues Ser-239, Ser-245, Ser-248, Lys-258, Ser-259, and Glu-260 each carry the phosphoserine modification. Phosphothreonine occurs at positions 277, 280, and 282. Ser-287 carries the post-translational modification Phosphoserine. A compositionally biased stretch (low complexity) spans 287-304; that stretch reads SSTTLTKSFTSSSPSSPS. The residue at position 292 (Thr-292) is a Phosphothreonine. Residues Phe-295, Ser-297, Ser-298, Ser-299, Ser-301, Ser-302, Ser-304, Ala-306, Asp-311, and Pro-316 each carry the phosphoserine modification. Ser-320, Ser-322, and Gly-326 each carry phosphothreonine. Residues His-341, Val-344, and Arg-346 each carry the phosphoserine modification. Glu-366 is subject to Phosphothreonine. Phosphoserine occurs at positions 381 and 383. Asp-413 and Lys-415 each carry phosphothreonine. Phosphoserine is present on residues Arg-437 and Arg-439. Ile-459 is modified (phosphothreonine). Phosphoserine is present on residues Lys-474, Ser-494, Ser-497, Ser-550, and Ser-750. Residues 807–866 form a disordered region; sequence RMPRSASFQDVDTANSSCHHQDRGGALQDRESPRSYSSTLTDMGRSAPRERRGTPEKEKL. Polar residues predominate over residues 812–824; sequence ASFQDVDTANSSC. The span at 825–839 shows a compositional bias: basic and acidic residues; the sequence is HHQDRGGALQDRESP. A Phosphoserine modification is found at Ser-843. Residues 853-866 show a composition bias toward basic and acidic residues; that stretch reads APRERRGTPEKEKL. 2 SH3 domains span residues 863-922 and 938-999; these read KEKL…KLTP and GEIG…VVKK. 2 positions are modified to phosphoserine: Ser-1017 and Ser-1023. Positions 1041–1100 constitute an SH3 3 domain; the sequence is GGGEPFQALYNYTPRNEDELELRESDVIDVMEKCDDGWFVGTSRRTKFFGTFPGNYVKRL.

In terms of assembly, interacts with ABL, CBL, DNM1, DNM2, FLOT1, AFDN, PTK2B/PYK2, SAPAP, SPTAN1, SYNJ1, SYNJ2, VCL/vinculin and WASF. Interacts with ABL1/c-Abl, ABL2/v-Abl/Arg, ACTN, CBL and PALLD. Interacts with PTPN12 and WASF1 via its SH3 domains; this interaction may mediate the partial PTPN12 and WASF1 translocation to focal adhesion sites. In terms of processing, ubiquitinated by CBL. Dephosphorylated by PTPN12. As to expression, abundantly expressed in heart. In cardiac muscle cells, located in the Z-disks of sarcomere. Also found, but to a lower extent, in small and large intestine, pancreas, thymus, colon, spleen, prostate, testis, brain, ovary and epithelial cells. In the pancreas, mainly expressed in acinar cells, duct cells and all cell types in islets (at protein level). Tends to be down-regulated in pancreatic adenocarcinomas ans metastases.

It is found in the cytoplasm. The protein localises to the perinuclear region. It localises to the apical cell membrane. The protein resides in the cell junction. Its subcellular location is the focal adhesion. It is found in the cell projection. The protein localises to the lamellipodium. In terms of biological role, adapter protein that plays a role in the assembling of signaling complexes, being a link between ABL kinases and actin cytoskeleton. Can form complex with ABL1 and CBL, thus promoting ubiquitination and degradation of ABL1. May play a role in the regulation of pancreatic cell adhesion, possibly by acting on WASF1 phosphorylation, enhancing phosphorylation by ABL1, as well as dephosphorylation by PTPN12. Isoform 6 increases water and sodium absorption in the intestine and gall-bladder. The sequence is that of Sorbin and SH3 domain-containing protein 2 (SORBS2) from Homo sapiens (Human).